The chain runs to 532 residues: UDP-glucuronosyltransferase 1A6 (532 aa).

The N-terminal stretch at 1–26 is a signal peptide; the sequence is MACLLRSFQRISAGVFFLALWGMVVG. Asparagine 294 and asparagine 346 each carry an N-linked (GlcNAc...) asparagine glycan. The chain crosses the membrane as a helical span at residues 490–506; that stretch reads VIGFLLAVVLTVAFITF.

Belongs to the UDP-glycosyltransferase family. As to quaternary structure, isoform 1 interacts with isoform 3/i2 suggesting that oligomerization is involved in negative regulation of transferase activity by isoform 3. Isoform 1 also interacts with respective i2 isoforms of UGT1A1, UGT1A3, UGT1A4, UGT1A7, UGT1A8, UGT1A9 and UGT1A10. In terms of tissue distribution, expressed in skin. Isoforms 1 and 3 are expressed in kidney and liver. Isoform 1 but not isoform 2 is expressed in colon, esophagus and small intestine.

Its subcellular location is the microsome. It localises to the endoplasmic reticulum membrane. The enzyme catalyses glucuronate acceptor + UDP-alpha-D-glucuronate = acceptor beta-D-glucuronoside + UDP + H(+). The catalysed reaction is (5Z,8Z,11Z,14Z)-eicosatetraenoate + UDP-alpha-D-glucuronate = O-[(5Z),(8Z),(11Z),(14Z)-eicosatetraenoyl]-beta-D-glucuronate + UDP. It carries out the reaction 15-hydroxy-(5Z,8Z,11Z,13E)-eicosatetraenoate + UDP-alpha-D-glucuronate = 15-O-(beta-D-glucuronosyl)-(5Z,8Z,11Z,14Z)-eicosatetraenoate + UDP + H(+). It catalyses the reaction (E)-ferulate + UDP-alpha-D-glucuronate = (E)-4-O-(beta-D-glucuronosyl)-ferulate + UDP + H(+). The enzyme catalyses (E)-ferulate + UDP-alpha-D-glucuronate = (E)-ferulic acid beta-D-glucuronate ester + UDP. In terms of biological role, UDP-glucuronosyltransferase (UGT) that catalyzes phase II biotransformation reactions in which lipophilic substrates are conjugated with glucuronic acid to facilitate their inactivation and excretion from the body. Essential for the elimination and detoxification of drugs, xenobiotics and endogenous compounds. Involved in the glucuronidation of arachidonic acid (AA) and AA-derived eicosanoids including 15-HETE and 20-HETE. Conjugates small planar phenolic molecules such as 4-nitrophenol, 1-naphthol, and 4-methylumbelliferone. The bulky phenol 4-hydroxybiphenyl, androgens and estrogens are not substrates. 2-hydroxybiphenyl is an excellent substrate. Involved in the glucuronidation of the phytochemical ferulic acid at the phenolic or the carboxylic acid group. Its function is as follows. Isoform 3 lacks transferase activity but acts as a negative regulator of isoform 1. The protein is UDP-glucuronosyltransferase 1A6 of Homo sapiens (Human).